A 106-amino-acid chain; its full sequence is CRISPR-associated endoribonuclease Cas2 (106 aa).

Position 22 (Asp22) interacts with Mg(2+).

Belongs to the CRISPR-associated endoribonuclease Cas2 protein family. Homodimer, forms a heterotetramer with a Cas1 homodimer. It depends on Mg(2+) as a cofactor.

Functionally, CRISPR (clustered regularly interspaced short palindromic repeat), is an adaptive immune system that provides protection against mobile genetic elements (viruses, transposable elements and conjugative plasmids). CRISPR clusters contain sequences complementary to antecedent mobile elements and target invading nucleic acids. CRISPR clusters are transcribed and processed into CRISPR RNA (crRNA). Functions as a ssRNA-specific endoribonuclease. Involved in the integration of spacer DNA into the CRISPR cassette. This chain is CRISPR-associated endoribonuclease Cas2, found in Fusobacterium nucleatum subsp. nucleatum (strain ATCC 25586 / DSM 15643 / BCRC 10681 / CIP 101130 / JCM 8532 / KCTC 2640 / LMG 13131 / VPI 4355).